Consider the following 355-residue polypeptide: 3-dehydroquinate synthase (355 aa).

Residues 71-76, 105-109, 129-130, lysine 142, and lysine 151 each bind NAD(+); these read EGEERK, GVVGD, and TS. Zn(2+) is bound by residues glutamate 184, histidine 246, and histidine 263.

Belongs to the sugar phosphate cyclases superfamily. Dehydroquinate synthase family. It depends on NAD(+) as a cofactor. Co(2+) serves as cofactor. The cofactor is Zn(2+).

The protein resides in the cytoplasm. The enzyme catalyses 7-phospho-2-dehydro-3-deoxy-D-arabino-heptonate = 3-dehydroquinate + phosphate. Its pathway is metabolic intermediate biosynthesis; chorismate biosynthesis; chorismate from D-erythrose 4-phosphate and phosphoenolpyruvate: step 2/7. Its function is as follows. Catalyzes the conversion of 3-deoxy-D-arabino-heptulosonate 7-phosphate (DAHP) to dehydroquinate (DHQ). This is 3-dehydroquinate synthase from Streptococcus pneumoniae (strain ATCC BAA-255 / R6).